We begin with the raw amino-acid sequence, 141 residues long: uncharacterized protein (141 aa).

2 helical membrane passes run 41 to 61 (LIML…NYLF) and 95 to 115 (IIFL…SGFF).

It is found in the cell membrane. This is an uncharacterized protein from Rickettsia prowazekii (strain Madrid E).